The chain runs to 159 residues: SsrA-binding protein (159 aa).

The disordered stretch occupies residues 131–159 (KGKKLHDKRESEKERDWNRQKSRLLKDNG). The segment covering 137–159 (DKRESEKERDWNRQKSRLLKDNG) has biased composition (basic and acidic residues).

It belongs to the SmpB family.

It localises to the cytoplasm. Required for rescue of stalled ribosomes mediated by trans-translation. Binds to transfer-messenger RNA (tmRNA), required for stable association of tmRNA with ribosomes. tmRNA and SmpB together mimic tRNA shape, replacing the anticodon stem-loop with SmpB. tmRNA is encoded by the ssrA gene; the 2 termini fold to resemble tRNA(Ala) and it encodes a 'tag peptide', a short internal open reading frame. During trans-translation Ala-aminoacylated tmRNA acts like a tRNA, entering the A-site of stalled ribosomes, displacing the stalled mRNA. The ribosome then switches to translate the ORF on the tmRNA; the nascent peptide is terminated with the 'tag peptide' encoded by the tmRNA and targeted for degradation. The ribosome is freed to recommence translation, which seems to be the essential function of trans-translation. The chain is SsrA-binding protein from Rhizobium etli (strain CIAT 652).